The following is a 218-amino-acid chain: Large ribosomal subunit protein uL3 (218 aa).

The protein belongs to the universal ribosomal protein uL3 family. Part of the 50S ribosomal subunit. Forms a cluster with proteins L14 and L19.

Its function is as follows. One of the primary rRNA binding proteins, it binds directly near the 3'-end of the 23S rRNA, where it nucleates assembly of the 50S subunit. The polypeptide is Large ribosomal subunit protein uL3 (Corynebacterium urealyticum (strain ATCC 43042 / DSM 7109)).